Here is a 145-residue protein sequence, read N- to C-terminus: Large ribosomal subunit protein bL9 (145 aa).

It belongs to the bacterial ribosomal protein bL9 family.

Functionally, binds to the 23S rRNA. The protein is Large ribosomal subunit protein bL9 of Ureaplasma parvum serovar 3 (strain ATCC 700970).